Reading from the N-terminus, the 184-residue chain is Large ribosomal subunit protein uL5 (184 aa).

It belongs to the universal ribosomal protein uL5 family. In terms of assembly, part of the 50S ribosomal subunit; part of the 5S rRNA/L5/L18/L25 subcomplex. Contacts the 5S rRNA and the P site tRNA. Forms a bridge to the 30S subunit in the 70S ribosome.

Functionally, this is one of the proteins that bind and probably mediate the attachment of the 5S RNA into the large ribosomal subunit, where it forms part of the central protuberance. In the 70S ribosome it contacts protein S13 of the 30S subunit (bridge B1b), connecting the 2 subunits; this bridge is implicated in subunit movement. Contacts the P site tRNA; the 5S rRNA and some of its associated proteins might help stabilize positioning of ribosome-bound tRNAs. The chain is Large ribosomal subunit protein uL5 from Wolinella succinogenes (strain ATCC 29543 / DSM 1740 / CCUG 13145 / JCM 31913 / LMG 7466 / NCTC 11488 / FDC 602W) (Vibrio succinogenes).